Here is a 510-residue protein sequence, read N- to C-terminus: Putative glycerol-3-phosphate transporter 3 (510 aa).

Transmembrane regions (helical) follow at residues 31-51 (LSFK…YIAF), 91-111 (ALLG…MFVA), 123-143 (FLTI…VAFW), 158-178 (LAGW…GNWF), 185-205 (VIMG…TLIA), 217-237 (FVGP…FLPV), 279-299 (VGFL…CLFF), 331-351 (GNLS…AGYF), 355-375 (LDGR…ALFL), 378-398 (IYGH…GLFV), 436-456 (TGSV…AISW), and 459-479 (VFYM…TLII).

This sequence belongs to the major facilitator superfamily. Organophosphate:Pi antiporter (OPA) (TC 2.A.1.4) family.

The protein resides in the membrane. This Arabidopsis thaliana (Mouse-ear cress) protein is Putative glycerol-3-phosphate transporter 3.